Reading from the N-terminus, the 643-residue chain is UvrABC system protein C (643 aa).

The GIY-YIG domain occupies 25–104 (AEPGVYFMRD…IKQHQPHFNV (80 aa)). The UVR domain maps to 214–249 (SELVELLEAQMLQAAENLEFEKAAKIRDQIRGLEGL).

Belongs to the UvrC family. Interacts with UvrB in an incision complex.

Its subcellular location is the cytoplasm. The UvrABC repair system catalyzes the recognition and processing of DNA lesions. UvrC both incises the 5' and 3' sides of the lesion. The N-terminal half is responsible for the 3' incision and the C-terminal half is responsible for the 5' incision. The sequence is that of UvrABC system protein C from Synechococcus elongatus (strain ATCC 33912 / PCC 7942 / FACHB-805) (Anacystis nidulans R2).